A 987-amino-acid polypeptide reads, in one-letter code: Mitotic checkpoint serine/threonine-protein kinase bub-1 (987 aa).

Disordered stretches follow at residues 278 to 385 and 574 to 599; these read RRRH…TSKS and LAAN…KDSS. Positions 350 to 364 are enriched in basic and acidic residues; sequence ERLKIMTAGRKDGNP. The span at 368–380 shows a compositional bias: low complexity; that stretch reads STSISSNYSTASA. The segment covering 575-587 has biased composition (polar residues); that stretch reads AANQAVQPSVTES. Positions 588-599 are enriched in basic and acidic residues; it reads SKPERSDPKDSS. Residues 690–987 enclose the Protein kinase domain; the sequence is LHIQTLIGQG…EACDLAANQK (298 aa). ATP-binding positions include 696-704 and lysine 718; that span reads IGQGGYAKV. Aspartate 814 functions as the Proton acceptor in the catalytic mechanism.

Belongs to the protein kinase superfamily. Ser/Thr protein kinase family. BUB1 subfamily. In terms of assembly, interacts (via kinase domain) with mdf-1 (via coiled coil domain); the interaction recruits mdf-1 to unattached kinetochores during mitosis and between homologous chromosomes in early anaphase of meiosis I. May interact with bub-3; for localization at the kinetochore and the onset of anaphase.

It localises to the cytoplasm. Its subcellular location is the cell cortex. The protein localises to the nucleus. The protein resides in the chromosome. It is found in the centromere. It localises to the kinetochore. It catalyses the reaction L-seryl-[protein] + ATP = O-phospho-L-seryl-[protein] + ADP + H(+). It carries out the reaction L-threonyl-[protein] + ATP = O-phospho-L-threonyl-[protein] + ADP + H(+). In terms of biological role, serine/threonine-protein kinase essential for spindle-assembly checkpoint signaling. Plays a key role in the recruitment of the checkpoint proteins bub-3, mdf-1 and mdf-2 to unattached kinetochores. mdf-1 recruitment is independent of bub-1 kinase activity. Has a role in the correct kinetochore localization of the spindly-like protein spdl-1. In addition, during meiotic anaphase I, controls the recruitment of hcp-1/2 and klp-19 to the ring-shaped domain formed between chromosomes. Involved in chromosome alignment, chromosome homolog segregation and spindle assembly. In association with bub-3 at the kinetochore region of chromosomes, promotes the onset on anaphase independently from spindle checkpoint signaling and promotes the formation of stable end-on bipolar attachments of chromosomes. Plays a role in nuclear envelope breakdown. Required maternally during embryogenesis and in the zygote for the postembryonic development of several tissues including ventral cord neurons, gonad, intestine and seam cells. The protein is Mitotic checkpoint serine/threonine-protein kinase bub-1 of Caenorhabditis elegans.